The sequence spans 689 residues: Glycine--tRNA ligase beta subunit (689 aa).

This sequence belongs to the class-II aminoacyl-tRNA synthetase family. As to quaternary structure, tetramer of two alpha and two beta subunits.

The protein localises to the cytoplasm. It catalyses the reaction tRNA(Gly) + glycine + ATP = glycyl-tRNA(Gly) + AMP + diphosphate. The sequence is that of Glycine--tRNA ligase beta subunit from Photorhabdus laumondii subsp. laumondii (strain DSM 15139 / CIP 105565 / TT01) (Photorhabdus luminescens subsp. laumondii).